Here is a 383-residue protein sequence, read N- to C-terminus: BRISC and BRCA1-A complex member 2 (383 aa).

The residue at position 1 (Met1) is an N-acetylmethionine. Ser2 carries the post-translational modification Phosphoserine. 2 UEV-like regions span residues 30 to 147 and 275 to 364; these read DATN…TLLE and IAAF…RAKA.

This sequence belongs to the BABAM2 family. Component of the ARISC complex, at least composed of UIMC1/RAP80, ABRAXAS1, BRCC3/BRCC36, BABAM2 and BABAM1/NBA1. Component of the BRCA1-A complex, at least composed of BRCA1, BARD1, UIMC1/RAP80, ABRAXAS1, BRCC3/BRCC36, BABAM2 and BABAM1/NBA1. In the BRCA1-A complex, interacts directly with ABRAXAS1, BRCC3/BRCC36 and BABAM1/NBA1. Binds polyubiquitin. Component of the BRISC complex, at least composed of ABRAXAS2, BRCC3/BRCC36, BABAM2 and BABAM1/NBA1. Identified in a complex with SHMT2 and the other subunits of the BRISC complex. Component of the BRCA1/BRCA2 containing complex (BRCC), which also contains BRCA1, BRCA2, BARD1, BRCC3/BRCC36 and RAD51. BRCC is a ubiquitin E3 ligase complex that enhances cellular survival following DNA damage. May interact with FAS and TNFRSF1A. As to expression, expressed in all cell lines examined. Highly expressed in placenta.

Its subcellular location is the cytoplasm. The protein resides in the nucleus. Component of the BRCA1-A complex, a complex that specifically recognizes 'Lys-63'-linked ubiquitinated histones H2A and H2AX at DNA lesions sites, leading to target the BRCA1-BARD1 heterodimer to sites of DNA damage at double-strand breaks (DSBs). The BRCA1-A complex also possesses deubiquitinase activity that specifically removes 'Lys-63'-linked ubiquitin on histones H2A and H2AX. In the BRCA1-A complex, it acts as an adapter that bridges the interaction between BABAM1/NBA1 and the rest of the complex, thereby being required for the complex integrity and modulating the E3 ubiquitin ligase activity of the BRCA1-BARD1 heterodimer. Component of the BRISC complex, a multiprotein complex that specifically cleaves 'Lys-63'-linked ubiquitin in various substrates. Within the BRISC complex, acts as an adapter that bridges the interaction between BABAM1/NBA1 and the rest of the complex, thereby being required for the complex integrity. The BRISC complex is required for normal mitotic spindle assembly and microtubule attachment to kinetochores via its role in deubiquitinating NUMA1. The BRISC complex plays a role in interferon signaling via its role in the deubiquitination of the interferon receptor IFNAR1; deubiquitination increases IFNAR1 activity by enhancing its stability and cell surface expression. Down-regulates the response to bacterial lipopolysaccharide (LPS) via its role in IFNAR1 deubiquitination. May play a role in homeostasis or cellular differentiation in cells of neural, epithelial and germline origins. May also act as a death receptor-associated anti-apoptotic protein, which inhibits the mitochondrial apoptotic pathway. May regulate TNF-alpha signaling through its interactions with TNFRSF1A; however these effects may be indirect. The sequence is that of BRISC and BRCA1-A complex member 2 from Homo sapiens (Human).